The chain runs to 472 residues: Serine incorporator 3 (472 aa).

The Extracellular portion of the chain corresponds to 1–96 (MGAVLGVFSL…KDCDVLVGFK (96 aa)). N34 is a glycosylation site (N-linked (GlcNAc...) asparagine). Residues 97-117 (AVYRINFAVAIFFFAFFLLML) form a helical membrane-spanning segment. The Cytoplasmic portion of the chain corresponds to 118-132 (KVKTSKDPRAAVHNG). A helical transmembrane segment spans residues 133 to 153 (FWFFKIAAIIGIMIGSFYIPG). The Extracellular portion of the chain corresponds to 154–158 (GSFTE). Residues 159-179 (VWFVAGMLGASFFIIIQLVLL) traverse the membrane as a helical segment. Residues 180 to 206 (VDMAHSWNELWVNRMEEGNPRLWYAAL) are Cytoplasmic-facing. The helical transmembrane segment at 207–227 (LSFTSLFYILSIVFAALLYVF) threads the bilayer. At 228–238 (YTKPDDCTENK) the chain is on the extracellular side. A helical transmembrane segment spans residues 239–259 (VFISLNLIFCVAVSIVSILPK). Residues 260 to 329 (VQEHQPRSGL…APAYAPPSQS (70 aa)) are Cytoplasmic-facing. A helical transmembrane segment spans residues 330-350 (GHFMNLDDIWGLIIFVFCLIY). Over 351 to 405 (SSFRTSSNSQVNKLTLSGSDSVILGDTTNGANDEEDGQPRRAVDNEKEGVQYSYS) the chain is Extracellular. Residue S371 is modified to Phosphoserine. A helical transmembrane segment spans residues 406 to 426 (FFHLMLCCASLYIMMTITSWY). The Cytoplasmic segment spans residues 427–445 (SPDAKFQKVSSKWLAVWFK). Residues 446-466 (MGSSWLCLLLYLWTLVAPLVL) traverse the membrane as a helical segment. Residues 467–472 (TGRDFS) lie on the Extracellular side of the membrane.

It belongs to the TDE1 family. Post-translationally, N-glycosylated. In terms of tissue distribution, highly expressed in the neuronal populations such as Purkinje cells in the cerebellum, brainstem and spinal motor neurons, locus coeruleus and raphe nuclei. Highly expressed also in thymus, kidney liver and testis.

The protein resides in the cell membrane. Its subcellular location is the golgi apparatus membrane. It catalyses the reaction a 1,2-diacyl-sn-glycero-3-phospho-L-serine(in) = a 1,2-diacyl-sn-glycero-3-phospho-L-serine(out). The enzyme catalyses a 1,2-diacyl-sn-glycero-3-phosphocholine(in) = a 1,2-diacyl-sn-glycero-3-phosphocholine(out). It carries out the reaction a 1,2-diacyl-sn-glycero-3-phosphoethanolamine(in) = a 1,2-diacyl-sn-glycero-3-phosphoethanolamine(out). Functionally, restriction factor required to restrict infectivity of gammaretroviruses: acts by inhibiting an early step of viral infection. Impairs the penetration of the viral particle into the cytoplasm. Non-ATP-dependent, non-specific lipid transporter for phosphatidylserine, phosphatidylcholine, and phosphatidylethanolamine. Functions as a scramblase that flips lipids in both directions across the membrane. Phospholipid scrambling results in gammaretroviral surface exposure of phosphatidylserine and loss of membrane asymmetry, which leads to loss of infectivity. The chain is Serine incorporator 3 (Serinc3) from Mus musculus (Mouse).